Here is a 68-residue protein sequence, read N- to C-terminus: Probable tautomerase jhp_0858 (68 aa).

P2 serves as the catalytic Proton acceptor; via imino nitrogen.

Belongs to the 4-oxalocrotonate tautomerase family.

This chain is Probable tautomerase jhp_0858, found in Helicobacter pylori (strain J99 / ATCC 700824) (Campylobacter pylori J99).